We begin with the raw amino-acid sequence, 266 residues long: Dioicin-2 (266 aa).

2 disulfides stabilise this stretch: C32/C263 and C85/C102. E176 is a catalytic residue.

It localises to the secreted. Its subcellular location is the extracellular space. The protein localises to the golgi apparatus. The protein resides in the vacuole. It carries out the reaction Endohydrolysis of the N-glycosidic bond at one specific adenosine on the 28S rRNA.. Its function is as follows. Nicks pBR322 dsDNA. Has adenine polynucleotide glycosidase activity on herring sperm ssDNA. This is Dioicin-2 from Phytolacca dioica (Bella sombra tree).